A 1693-amino-acid chain; its full sequence is Serine protease filzig (1693 aa).

Residues 1–47 (MFKWVTPASTATLSRCTLPATTAATTTTTAMAATRTATTTTRTTRPQ) lie on the Cytoplasmic side of the membrane. A helical; Signal-anchor for type II membrane protein transmembrane segment spans residues 48-68 (LLSIALTSLIIIVASFVPTTS). Residues 69–1693 (GFRSIETNGG…PWLRSITGVK (1625 aa)) are Extracellular-facing. Disordered regions lie at residues 170 to 198 (QQSA…QQPS), 212 to 321 (QQLD…NDDF), 352 to 465 (GLQD…THPG), and 477 to 524 (STGY…TTVS). Composition is skewed to polar residues over residues 178-198 (FESY…QQPS) and 212-222 (QQLDSSSSISP). Low complexity-rich tracts occupy residues 230 to 241 (EPQQQEYQSESE) and 252 to 268 (TSSS…SSAS). Residues 274–294 (EPSQPADASNDQTTQKINKQP) show a composition bias toward polar residues. Composition is skewed to low complexity over residues 358–404 (SSES…PTQK), 422–431 (QQKPQQVAKP), and 488–501 (EPPK…PAEQ). The span at 502–524 (SYISSSTSAKRPTTGHNSPTTVS) shows a compositional bias: polar residues. 2 N-linked (GlcNAc...) asparagine glycosylation sites follow: Asn541 and Asn582. 3 disordered regions span residues 615–635 (QDAS…PGYG), 752–1007 (HYNP…PPAT), and 1057–1090 (YAHR…TVLI). A compositionally biased stretch (polar residues) spans 771 to 799 (SVSSHTTKVQEQMDETSNGYQQSETTSGY). Residues 836 to 847 (PRPKPSTKRPAV) are compositionally biased toward basic residues. Composition is skewed to polar residues over residues 951-962 (QYDQPSAPSASY) and 989-1000 (KPISTSYVTGPS). Residues Asn1215 and Asn1272 are each glycosylated (N-linked (GlcNAc...) asparagine). Composition is skewed to low complexity over residues 1297–1307 (PVRTATTTRPK), 1331–1353 (TTTR…TTRR), and 1362–1376 (RVSS…SSAR). The interval 1297–1435 (PVRTATTTRP…TPNLAFHSPS (139 aa)) is disordered. A compositionally biased stretch (acidic residues) spans 1380–1391 (DEIVDEEDEEDV). Positions 1449 to 1691 (IVGGKGSTFG…YKPWLRSITG (243 aa)) constitute a Peptidase S1 domain. Cys1480 and Cys1496 are joined by a disulfide. Catalysis depends on charge relay system residues His1495 and Asp1544. Intrachain disulfides connect Cys1608–Cys1627 and Cys1638–Cys1667. The Charge relay system role is filled by Ser1642.

It belongs to the peptidase S1 family.

The protein localises to the cell membrane. Probable endopeptidase. In tracheal terminal cells, acts downstream of ich to regulate seamless tube growth and/or maintenance probably by processing lumenal matrix proteins. The polypeptide is Serine protease filzig (Drosophila melanogaster (Fruit fly)).